Consider the following 466-residue polypeptide: Ribulose bisphosphate carboxylase large chain (466 aa).

At Lys-5 the chain carries N6,N6,N6-trimethyllysine. 2 residues coordinate substrate: Asn-114 and Thr-164. Lys-166 (proton acceptor) is an active-site residue. Lys-168 contacts substrate. Mg(2+)-binding residues include Lys-192, Asp-194, and Glu-195. Position 192 is an N6-carboxylysine (Lys-192). His-285 serves as the catalytic Proton acceptor. The substrate site is built by Arg-286, His-318, and Ser-370.

Belongs to the RuBisCO large chain family. Type I subfamily. Heterohexadecamer of 8 large chains and 8 small chains; disulfide-linked. The disulfide link is formed within the large subunit homodimers. Mg(2+) is required as a cofactor. Post-translationally, the disulfide bond which can form in the large chain dimeric partners within the hexadecamer appears to be associated with oxidative stress and protein turnover.

It is found in the plastid. Its subcellular location is the chloroplast. The enzyme catalyses 2 (2R)-3-phosphoglycerate + 2 H(+) = D-ribulose 1,5-bisphosphate + CO2 + H2O. It carries out the reaction D-ribulose 1,5-bisphosphate + O2 = 2-phosphoglycolate + (2R)-3-phosphoglycerate + 2 H(+). In terms of biological role, ruBisCO catalyzes two reactions: the carboxylation of D-ribulose 1,5-bisphosphate, the primary event in carbon dioxide fixation, as well as the oxidative fragmentation of the pentose substrate in the photorespiration process. Both reactions occur simultaneously and in competition at the same active site. In Adoxa moschatellina (Moschatel), this protein is Ribulose bisphosphate carboxylase large chain.